A 312-amino-acid chain; its full sequence is Tyrosine recombinase XerC (312 aa).

One can recognise a Core-binding (CB) domain in the interval 1–103; the sequence is MIASIYSFLD…SIKSFAHYCV (103 aa). The Tyr recombinase domain maps to 124–306; that stretch reads ELPSPMTYAQ…SVKLKKQTHQ (183 aa). Residues arginine 164, lysine 188, histidine 258, arginine 261, and histidine 284 contribute to the active site. Tyrosine 293 functions as the O-(3'-phospho-DNA)-tyrosine intermediate in the catalytic mechanism.

It belongs to the 'phage' integrase family. XerC subfamily. In terms of assembly, forms a cyclic heterotetrameric complex composed of two molecules of XerC and two molecules of XerD.

Its subcellular location is the cytoplasm. Functionally, site-specific tyrosine recombinase, which acts by catalyzing the cutting and rejoining of the recombining DNA molecules. The XerC-XerD complex is essential to convert dimers of the bacterial chromosome into monomers to permit their segregation at cell division. It also contributes to the segregational stability of plasmids. The protein is Tyrosine recombinase XerC of Chlamydia pneumoniae (Chlamydophila pneumoniae).